The sequence spans 303 residues: uncharacterized protein (303 aa).

6 helical membrane-spanning segments follow: residues 12–32, 81–101, 117–137, 174–194, 208–228, and 265–286; these read GLPI…SGIL, ISSV…VLEF, ALAG…FDVI, CIAM…TCMS, IISG…LDVV, and FFKG…SWAA. Solcar repeat units follow at residues 17 to 105, 111 to 195, and 206 to 293; these read SPMY…FKSK, DRPL…CMSF, and SHII…GKEI.

Belongs to the mitochondrial carrier (TC 2.A.29) family.

The protein localises to the mitochondrion inner membrane. This is an uncharacterized protein from Schizosaccharomyces pombe (strain 972 / ATCC 24843) (Fission yeast).